A 226-amino-acid chain; its full sequence is Phosphoribosylformylglycinamidine synthase subunit PurQ (226 aa).

Residues 2-226 (KFAVIQFPGS…LKNFLVTVKN (225 aa)) form the Glutamine amidotransferase type-1 domain. Cys86 functions as the Nucleophile in the catalytic mechanism. Catalysis depends on residues His195 and Glu197.

In terms of assembly, part of the FGAM synthase complex composed of 1 PurL, 1 PurQ and 2 PurS subunits.

The protein resides in the cytoplasm. It catalyses the reaction N(2)-formyl-N(1)-(5-phospho-beta-D-ribosyl)glycinamide + L-glutamine + ATP + H2O = 2-formamido-N(1)-(5-O-phospho-beta-D-ribosyl)acetamidine + L-glutamate + ADP + phosphate + H(+). The catalysed reaction is L-glutamine + H2O = L-glutamate + NH4(+). Its pathway is purine metabolism; IMP biosynthesis via de novo pathway; 5-amino-1-(5-phospho-D-ribosyl)imidazole from N(2)-formyl-N(1)-(5-phospho-D-ribosyl)glycinamide: step 1/2. Part of the phosphoribosylformylglycinamidine synthase complex involved in the purines biosynthetic pathway. Catalyzes the ATP-dependent conversion of formylglycinamide ribonucleotide (FGAR) and glutamine to yield formylglycinamidine ribonucleotide (FGAM) and glutamate. The FGAM synthase complex is composed of three subunits. PurQ produces an ammonia molecule by converting glutamine to glutamate. PurL transfers the ammonia molecule to FGAR to form FGAM in an ATP-dependent manner. PurS interacts with PurQ and PurL and is thought to assist in the transfer of the ammonia molecule from PurQ to PurL. This Lactococcus lactis subsp. cremoris (Streptococcus cremoris) protein is Phosphoribosylformylglycinamidine synthase subunit PurQ.